The following is a 981-amino-acid chain: Echinoderm microtubule-associated protein-like 4 (981 aa).

Methionine 1 is modified (N-acetylmethionine). 2 disordered regions span residues 1–20 and 57–205; these read MDGFAGSLDDSISAASTSDV and DHVA…PKLI. A microtubule-binding region spans residues 1–249; it reads MDGFAGSLDD…IPSDVDNYDD (249 aa). Phosphoserine is present on residues serine 7, serine 13, serine 16, and serine 61. Residues 14 to 63 adopt a coiled-coil conformation; that stretch reads AASTSDVQDRLSALESRVQQQEDEITVLKAALADVLRRLAISEDHVASVK. Threonine 96 bears the Phosphothreonine mark. Residues 114 to 134 show a composition bias toward basic and acidic residues; it reads GTEKKKEKPQGQREKKEESHS. Serine 134 is modified (phosphoserine; by NEK7). Residues 137–155 are compositionally biased toward low complexity; it reads QSPQIRASPSPQPSSQPLQ. Serine 144 is subject to Phosphoserine; by NEK6. Serine 146 bears the Phosphoserine; by NEK7 mark. The residue at position 171 (serine 171) is a Phosphoserine. A compositionally biased stretch (basic and acidic residues) spans 176–193; that stretch reads SPAEKSHNSWENSDDSRN. Serine 200 is modified (phosphoserine). Threonine 201 is subject to Phosphothreonine. Tyrosine 226 carries the post-translational modification Phosphotyrosine. Threonine 237 bears the Phosphothreonine mark. WD repeat units follow at residues 259-297, 301-348, 356-396, 403-438, and 445-484; these read LKLEWAYGYRGKDCRANVYLLPTGKIVYFIASVVVLFNY, TQRH…VWDS, IIGL…VWDW, AEIKTTNEVVLAVEFHPTDANTIITCGKSHIFFWTW, and RKQGIFGKYEKPKFVQCLAFLGNGDVLTGDSGGVMLIWSK. Threonine 490 carries the phosphothreonine; by NEK6 modification. WD repeat units follow at residues 500–538, 543–579, 582–621, 625–662, 668–704, 711–750, 760–818, and 825–864; these read QISKQIKAHDGSVFTLCQMRNGMLLTGGGKDRKIILWDH, EREIEVPDQYGTIRAVAEGKADQFLVGTSRNFILRGT, DGFQIEVQGHTDELWGLATHPFKDLLLTCAQDRQVCLWNS, RLEWTRLVDEPGHCADFHPSGTVVAIGTHSGRWFVLDA, VSIHTDGNEQLSVMRYSIDGTFLAVGSHDNFIYLYVV, YSRYGRCTGHSSYITHLDWSPDNKYIMSNSGDYEILYWDI, RSDC…LFQY, and APSHKYSAHSSHVTNVSFTHNDSHLISTGGKDMSIIQWKL. Threonine 609 is subject to Phosphothreonine; by NEK6 and NEK7. Polar residues predominate over residues 881-893; that stretch reads LTKAPVSSTESVI. The tract at residues 881–981 is disordered; the sequence is LTKAPVSSTE…EDQQDPSPSS (101 aa). 2 positions are modified to phosphoserine: serine 891 and serine 895. Threonine 897 and threonine 899 each carry phosphothreonine. Serine 903 is subject to Phosphoserine. A compositionally biased stretch (polar residues) spans 916 to 931; the sequence is ISSSPTLLENSLEQTV. A compositionally biased stretch (acidic residues) spans 937–946; the sequence is HSEEESEEGS. Phosphoserine is present on serine 978. Serine 981 is subject to Phosphoserine; by NEK6 and NEK7.

The protein belongs to the WD repeat EMAP family. As to quaternary structure, homotrimer; self-association is mediated by the N-terminal coiled coil. Interacts (via WD repeats) with NUDC. Interacts with alpha- and beta-tubulin during mitosis. Phosphorylated during mitosis. Phosphorylation at Ser-144 and Ser-146 promotes its dissociation from microtubules during mitosis which is required for efficient chromosome congression.

It localises to the cytoplasm. The protein resides in the cytoskeleton. It is found in the spindle. The protein localises to the microtubule organizing center. Its subcellular location is the midbody. Functionally, essential for the formation and stability of microtubules (MTs). Required for the organization of the mitotic spindle and for the proper attachment of kinetochores to MTs. Promotes the recruitment of NUDC to the mitotic spindle for mitotic progression. In Homo sapiens (Human), this protein is Echinoderm microtubule-associated protein-like 4 (EML4).